We begin with the raw amino-acid sequence, 407 residues long: Imidazolonepropionase (407 aa).

Fe(3+) contacts are provided by H68 and H70. H68 and H70 together coordinate Zn(2+). 4-imidazolone-5-propanoate-binding residues include R77, Y140, and H173. Y140 lines the N-formimidoyl-L-glutamate pocket. H238 contributes to the Fe(3+) binding site. Zn(2+) is bound at residue H238. Q241 is a 4-imidazolone-5-propanoate binding site. Fe(3+) is bound at residue D313. D313 contacts Zn(2+). 2 residues coordinate N-formimidoyl-L-glutamate: N315 and G317. A 4-imidazolone-5-propanoate-binding site is contributed by T318.

Belongs to the metallo-dependent hydrolases superfamily. HutI family. Zn(2+) serves as cofactor. Fe(3+) is required as a cofactor.

Its subcellular location is the cytoplasm. The enzyme catalyses 4-imidazolone-5-propanoate + H2O = N-formimidoyl-L-glutamate. It participates in amino-acid degradation; L-histidine degradation into L-glutamate; N-formimidoyl-L-glutamate from L-histidine: step 3/3. Functionally, catalyzes the hydrolytic cleavage of the carbon-nitrogen bond in imidazolone-5-propanoate to yield N-formimidoyl-L-glutamate. It is the third step in the universal histidine degradation pathway. In Burkholderia ambifaria (strain MC40-6), this protein is Imidazolonepropionase.